Reading from the N-terminus, the 401-residue chain is Sulfate adenylyltransferase (401 aa).

It belongs to the sulfate adenylyltransferase family.

It catalyses the reaction sulfate + ATP + H(+) = adenosine 5'-phosphosulfate + diphosphate. It participates in sulfur metabolism; hydrogen sulfide biosynthesis; sulfite from sulfate: step 1/3. The sequence is that of Sulfate adenylyltransferase from Alcanivorax borkumensis (strain ATCC 700651 / DSM 11573 / NCIMB 13689 / SK2).